Here is a 75-residue protein sequence, read N- to C-terminus: Cruzioseptin-7 (75 aa).

A signal peptide spans 1 to 22; that stretch reads MAKLKKSLFLVLFLGLVSLSIC. Positions 23–43 are excised as a propeptide; it reads EEEKREEENEEVQEDDDQSEE. Positions 25–44 are disordered; it reads EKREEENEEVQEDDDQSEEK. Residues 30–41 are compositionally biased toward acidic residues; it reads ENEEVQEDDDQS.

As to expression, expressed by the skin glands.

It localises to the secreted. Has antimicrobial activity. The sequence is that of Cruzioseptin-7 from Cruziohyla calcarifer (Splendid leaf frog).